The sequence spans 644 residues: Threonine--tRNA ligase (644 aa).

The TGS domain maps to 1-61 (MKVSIEGSVV…TACETLEPVY (61 aa)). Residues 241-532 (DHRKLGTQLD…LTEHFAGAFP (292 aa)) form a catalytic region. Zn(2+) contacts are provided by Cys-333, His-384, and His-509.

This sequence belongs to the class-II aminoacyl-tRNA synthetase family. In terms of assembly, homodimer. Zn(2+) serves as cofactor.

It localises to the cytoplasm. The enzyme catalyses tRNA(Thr) + L-threonine + ATP = L-threonyl-tRNA(Thr) + AMP + diphosphate + H(+). In terms of biological role, catalyzes the attachment of threonine to tRNA(Thr) in a two-step reaction: L-threonine is first activated by ATP to form Thr-AMP and then transferred to the acceptor end of tRNA(Thr). Also edits incorrectly charged L-seryl-tRNA(Thr). The chain is Threonine--tRNA ligase from Oleidesulfovibrio alaskensis (strain ATCC BAA-1058 / DSM 17464 / G20) (Desulfovibrio alaskensis).